Reading from the N-terminus, the 2170-residue chain is ATP-binding cassette sub-family A member 7 (2170 aa).

The helical transmembrane segment at 22–42 (PIQLVVELLWPLFLFFILVAV) threads the bilayer. The Extracellular portion of the chain corresponds to 43–547 (RHSHPPLEHH…DVFLRVLSRS (505 aa)). Cysteine 75 and cysteine 222 are disulfide-bonded. N-linked (GlcNAc...) asparagine glycosylation is present at asparagine 309. The next 6 helical transmembrane spans lie at 548 to 568 (LPLFLTLAWIYSVALTVKAVV), 591 to 611 (LGWFLSCLGPFLVSAALLVLV), 624 to 644 (VVVFLFLAAFAVATVAQSFLL), 653 to 673 (LAAACGGLAYFALYLPYVLCV), 679 to 699 (LPLGGLLAVSLLSPVAFGFGC), and 733 to 753 (AFLLLDAVIYGLALWYLEAVC). Positions 805 to 1036 (VSIRGLKKHF…LGCGYYLTLV (232 aa)) constitute an ABC transporter 1 domain. 839 to 846 (GHNGAGKT) is an ATP binding site. The chain crosses the membrane as a helical span at residues 847–867 (TTLSILSGLFPPSSGSASILG). Residues 1044–1086 (THDLKGDTEDPRREKKSGSEGKTADTVLTRDGPHRSSQVPAPD) form a disordered region. Over residues 1045–1066 (HDLKGDTEDPRREKKSGSEGKT) the composition is skewed to basic and acidic residues. A helical transmembrane segment spans residues 1257–1277 (IVLPALFVGLALFFTLIVPPF). The Extracellular segment spans residues 1278-1562 (GQYPPLQLSP…TLIASSVDVL (285 aa)). Cysteine 1370 and cysteine 1384 form a disulfide bridge. 6 helical membrane passes run 1563 to 1583 (VSICVVFAMSFVPASFTLVLI), 1609 to 1629 (FLWDMCNYLVAVCIVVLIFLA), 1646 to 1666 (LLLLLYGWSITPLMYPASFFF), 1674 to 1694 (VVLTCINLFIGINSSMATFVL), 1708 to 1728 (ILKQVFLIFPHFCLGRGLIDM), and 1754 to 1774 (IIGKNLLAMVAQGPLFLLITL). The ABC transporter 2 domain occupies 1818–2050 (LVLRDLTKVY…FGAGHTLTLR (233 aa)). 1852 to 1859 (GVNGAGKT) contacts ATP. The tract at residues 2129–2170 (QGEEEEGSGQETETREVSTPGLQHPKRVSRFLEDPSSVETVI) is disordered.

The protein belongs to the ABC transporter superfamily. ABCA family. Post-translationally, N-glycosylated. In terms of tissue distribution, expressed in blood cells. Also detected in brain and ovary tissues (at protein level). Expressed in platelet.

It is found in the cell membrane. Its subcellular location is the golgi apparatus membrane. It localises to the early endosome membrane. The protein resides in the cell projection. The protein localises to the ruffle membrane. It is found in the phagocytic cup. Its subcellular location is the cytoplasm. In terms of biological role, ATP-binding cassette (ABC) transporter that plays a role in lipid homeostasis and macrophage-mediated phagocytosis. Binds APOA1 and may function in apolipoprotein-mediated phospholipid efflux from cells. May also mediate cholesterol efflux. May regulate cellular ceramide homeostasis during keratinocyte differentiation. Involved in lipid raft organization and CD1D localization on thymocytes and antigen-presenting cells, which plays an important role in natural killer T-cell development and activation. Plays a role in phagocytosis of apoptotic cells by macrophages. Macrophage phagocytosis is stimulated by APOA1 or APOA2, probably by stabilization of ABCA7. Also involved in phagocytic clearance of amyloid-beta by microglia cells and macrophages. Further limits amyloid-beta production by playing a role in the regulation of amyloid-beta A4 precursor protein (APP) endocytosis and/or processing. This is ATP-binding cassette sub-family A member 7 (Abca7) from Rattus norvegicus (Rat).